The sequence spans 218 residues: Capsid protein (218 aa).

N-acetylmethionine; by host is present on Met-1. The span at 1–10 shows a compositional bias: low complexity; the sequence is MDKSDSASAG. Residues 1–28 form a disordered region; sequence MDKSDSASAGRNRRRRPRRGSRSASSSA. The segment covering 11–21 has biased composition (basic residues); that stretch reads RNRRRRPRRGS.

The protein belongs to the cucumovirus capsid protein family.

Its subcellular location is the virion. Functionally, capsid protein. Probably binds RNA and plays a role in packaging. This is Capsid protein from Cucumber mosaic virus (strain M48) (CMV).